The following is a 495-amino-acid chain: UDP-N-acetylmuramoyl-L-alanyl-D-glutamate--2,6-diaminopimelate ligase (495 aa).

UDP-N-acetyl-alpha-D-muramoyl-L-alanyl-D-glutamate contacts are provided by residues Leu28, Ser30, and 45–47 (HRV). ATP is bound at residue 117-123 (GTNGKTT). UDP-N-acetyl-alpha-D-muramoyl-L-alanyl-D-glutamate contacts are provided by residues Asn158, 159–160 (TT), Ser186, Gln192, and Arg194. Lys226 is subject to N6-carboxylysine. Meso-2,6-diaminopimelate-binding positions include Arg394, 418 to 421 (DNPR), Gly469, and Glu473. The Meso-diaminopimelate recognition motif signature appears at 418–421 (DNPR).

The protein belongs to the MurCDEF family. MurE subfamily. Mg(2+) is required as a cofactor. In terms of processing, carboxylation is probably crucial for Mg(2+) binding and, consequently, for the gamma-phosphate positioning of ATP.

The protein resides in the cytoplasm. It carries out the reaction UDP-N-acetyl-alpha-D-muramoyl-L-alanyl-D-glutamate + meso-2,6-diaminopimelate + ATP = UDP-N-acetyl-alpha-D-muramoyl-L-alanyl-gamma-D-glutamyl-meso-2,6-diaminopimelate + ADP + phosphate + H(+). It participates in cell wall biogenesis; peptidoglycan biosynthesis. Its function is as follows. Catalyzes the addition of meso-diaminopimelic acid to the nucleotide precursor UDP-N-acetylmuramoyl-L-alanyl-D-glutamate (UMAG) in the biosynthesis of bacterial cell-wall peptidoglycan. This chain is UDP-N-acetylmuramoyl-L-alanyl-D-glutamate--2,6-diaminopimelate ligase, found in Histophilus somni (strain 129Pt) (Haemophilus somnus).